The following is a 37-amino-acid chain: Mu-agatoxin-Aa1d (37 aa).

Intrachain disulfides connect Cys-2-Cys-18, Cys-9-Cys-23, Cys-17-Cys-33, and Cys-25-Cys-31. At Asn-37 the chain carries Asparagine amide.

Belongs to the neurotoxin 07 (Beta/delta-agtx) family. 03 (aga-4) subfamily. Aga sub-subfamily. As to expression, expressed by the venom gland.

The protein localises to the secreted. In terms of biological role, insecticidal neurotoxin that induces an irreversible spastic paralysis when injected into insects. Modifies presynaptic voltage-gated sodium channels (Nav), causing them to open at the normal resting potential of the nerve. This leads to spontaneous release of neurotransmitter and repetitive action potentials in motor neurons. This is Mu-agatoxin-Aa1d from Agelenopsis aperta (North American funnel-web spider).